A 179-amino-acid chain; its full sequence is Probable chorismate pyruvate-lyase (179 aa).

Substrate contacts are provided by Arg82, Leu120, and Glu165.

This sequence belongs to the UbiC family.

The protein localises to the cytoplasm. It carries out the reaction chorismate = 4-hydroxybenzoate + pyruvate. It participates in cofactor biosynthesis; ubiquinone biosynthesis. Removes the pyruvyl group from chorismate, with concomitant aromatization of the ring, to provide 4-hydroxybenzoate (4HB) for the ubiquinone pathway. The protein is Probable chorismate pyruvate-lyase of Vibrio vulnificus (strain YJ016).